Consider the following 56-residue polypeptide: MIKKAMLLIMLYMVLVVNDLILYNILSKAIIKKSKNVWKLKHKPLKNINLETLKNY.

The chain crosses the membrane as a helical span at residues 6 to 26 (MLLIMLYMVLVVNDLILYNIL).

The protein localises to the membrane. This is an uncharacterized protein from Dictyostelium discoideum (Social amoeba).